Reading from the N-terminus, the 211-residue chain is Methylthioribulose-1-phosphate dehydratase (211 aa).

2 residues coordinate Zn(2+): H101 and H103.

The protein belongs to the aldolase class II family. MtnB subfamily. It depends on Zn(2+) as a cofactor.

The catalysed reaction is 5-(methylsulfanyl)-D-ribulose 1-phosphate = 5-methylsulfanyl-2,3-dioxopentyl phosphate + H2O. It functions in the pathway amino-acid biosynthesis; L-methionine biosynthesis via salvage pathway; L-methionine from S-methyl-5-thio-alpha-D-ribose 1-phosphate: step 2/6. Catalyzes the dehydration of methylthioribulose-1-phosphate (MTRu-1-P) into 2,3-diketo-5-methylthiopentyl-1-phosphate (DK-MTP-1-P). In Alcanivorax borkumensis (strain ATCC 700651 / DSM 11573 / NCIMB 13689 / SK2), this protein is Methylthioribulose-1-phosphate dehydratase.